Here is a 187-residue protein sequence, read N- to C-terminus: Photosystem I assembly protein Ycf4 (187 aa).

2 consecutive transmembrane segments (helical) span residues 25–47 (YWWA…SSYL) and 62–84 (FVPQ…IYLW).

It belongs to the Ycf4 family.

The protein localises to the plastid. Its subcellular location is the chloroplast thylakoid membrane. Functionally, seems to be required for the assembly of the photosystem I complex. The sequence is that of Photosystem I assembly protein Ycf4 from Mesostigma viride (Green alga).